Reading from the N-terminus, the 222-residue chain is Phosphoglycolate phosphatase (222 aa).

The active-site Nucleophile is Asp-8. Mg(2+) is bound by residues Asp-8 and Asp-10. A substrate-binding site is contributed by Lys-150. Residues Asp-173 and Asp-177 each coordinate Mg(2+).

Belongs to the archaeal SPP-like hydrolase family. Mg(2+) is required as a cofactor.

The enzyme catalyses 2-phosphoglycolate + H2O = glycolate + phosphate. In terms of biological role, catalyzes the dephosphorylation of 2-phosphoglycolate. This Metallosphaera sedula (strain ATCC 51363 / DSM 5348 / JCM 9185 / NBRC 15509 / TH2) protein is Phosphoglycolate phosphatase.